The chain runs to 130 residues: Small ribosomal subunit protein uS8 (130 aa).

It belongs to the universal ribosomal protein uS8 family. As to quaternary structure, part of the 30S ribosomal subunit. Contacts proteins S5 and S12.

Functionally, one of the primary rRNA binding proteins, it binds directly to 16S rRNA central domain where it helps coordinate assembly of the platform of the 30S subunit. The protein is Small ribosomal subunit protein uS8 of Opitutus terrae (strain DSM 11246 / JCM 15787 / PB90-1).